The chain runs to 203 residues: Ras-related protein RABD2a (203 aa).

GTP is bound by residues 15–23 (GDSGVGKSC), 33–40 (YVESYIST), 63–67 (DTAGQ), 121–124 (NKSD), and 151–153 (SAK). An Effector region motif is present at residues 37–45 (YISTIGVDF). The disordered stretch occupies residues 176 to 203 (QPAGNNARPPTVQIRGQPVAQKNGCCST). 2 S-geranylgeranyl cysteine lipidation sites follow: cysteine 200 and cysteine 201.

It belongs to the small GTPase superfamily. Rab family. In terms of assembly, does not interact with GC5.

The protein localises to the golgi apparatus. It is found in the trans-Golgi network membrane. It localises to the golgi apparatus membrane. In terms of biological role, protein transport. Regulator of membrane traffic from the Golgi apparatus towards the endoplasmic reticulum (ER). This is Ras-related protein RABD2a (RABD2A) from Arabidopsis thaliana (Mouse-ear cress).